A 341-amino-acid chain; its full sequence is Hyaluronidase A (341 aa).

3 N-linked (GlcNAc...) asparagine glycosylation sites follow: N3, N68, and N83. 2 cysteine pairs are disulfide-bonded: C23–C311 and C189–C201.

The protein belongs to the glycosyl hydrolase 56 family. In terms of tissue distribution, expressed by the venom gland.

It localises to the secreted. The catalysed reaction is Random hydrolysis of (1-&gt;4)-linkages between N-acetyl-beta-D-glucosamine and D-glucuronate residues in hyaluronate.. In terms of biological role, may hydrolyze high molecular weight hyaluronic acid to produce small oligosaccharides. This Vespa velutina (Asian yellow-legged hornet) protein is Hyaluronidase A.